A 1220-amino-acid chain; its full sequence is DNA-directed RNA polymerase subunit beta (1220 aa).

The protein belongs to the RNA polymerase beta chain family. As to quaternary structure, the RNAP catalytic core consists of 2 alpha, 1 beta, 1 beta' and 1 omega subunit. When a sigma factor is associated with the core the holoenzyme is formed, which can initiate transcription.

It carries out the reaction RNA(n) + a ribonucleoside 5'-triphosphate = RNA(n+1) + diphosphate. DNA-dependent RNA polymerase catalyzes the transcription of DNA into RNA using the four ribonucleoside triphosphates as substrates. This chain is DNA-directed RNA polymerase subunit beta, found in Mesomycoplasma hyopneumoniae (strain 232) (Mycoplasma hyopneumoniae).